Here is a 145-residue protein sequence, read N- to C-terminus: MNNVQFSERQISAFSHEYKIRRKRQMLRFFCATALTLVSCRVAYRGMLGRKYIPNMFQLNYKPPPFSYKGEAASALVLGTGLATGGLTMMVFGGCWIADISTFPEFSYKLKRLMGQESDSSQLPMDTETSQIVNQLEQLLNNDKK.

2 helical membrane-spanning segments follow: residues 26–48 (MLRFFCATALTLVSCRVAYRGML) and 76–98 (LVLGTGLATGGLTMMVFGGCWIA).

This sequence belongs to the AIM11 family.

It localises to the membrane. In Zygosaccharomyces rouxii (strain ATCC 2623 / CBS 732 / NBRC 1130 / NCYC 568 / NRRL Y-229), this protein is Altered inheritance of mitochondria protein 11 (AIM11).